Here is a 630-residue protein sequence, read N- to C-terminus: Probable potassium transport system protein Kup (630 aa).

A run of 12 helical transmembrane segments spans residues 17–37, 51–71, 105–125, 144–164, 175–195, 218–238, 255–275, 283–303, 344–364, 374–394, 402–422, and 428–448; these read LAIA…LYSL, PSAI…VVGI, ITGL…GDAV, PQLS…LFWI, LFGP…VYHI, VLLA…AEAL, YVLV…LLLL, PFFL…STVA, IYVP…VIGF, YGIA…VVMV, LLVA…FGAN, and QGGW…MTWY.

Belongs to the HAK/KUP transporter (TC 2.A.72) family.

The protein resides in the cell inner membrane. The catalysed reaction is K(+)(in) + H(+)(in) = K(+)(out) + H(+)(out). Functionally, transport of potassium into the cell. Likely operates as a K(+):H(+) symporter. This is Probable potassium transport system protein Kup from Burkholderia thailandensis (strain ATCC 700388 / DSM 13276 / CCUG 48851 / CIP 106301 / E264).